The primary structure comprises 168 residues: uncharacterized protein (168 aa).

The chain crosses the membrane as a helical span at residues Phe24–Phe44. 2 disordered regions span residues Ser69–Asn92 and Asn142–Ile168. Over residues Asn142–Asn157 the composition is skewed to low complexity.

The protein localises to the membrane. This is an uncharacterized protein from Dictyostelium discoideum (Social amoeba).